The following is a 158-amino-acid chain: Ribosome maturation factor RimP (158 aa).

The protein belongs to the RimP family.

It is found in the cytoplasm. Its function is as follows. Required for maturation of 30S ribosomal subunits. This Deinococcus radiodurans (strain ATCC 13939 / DSM 20539 / JCM 16871 / CCUG 27074 / LMG 4051 / NBRC 15346 / NCIMB 9279 / VKM B-1422 / R1) protein is Ribosome maturation factor RimP.